Consider the following 169-residue polypeptide: CKLF-like MARVEL transmembrane domain-containing protein 2A (169 aa).

A run of 4 helical transmembrane segments spans residues 40–60, 69–89, 98–118, and 136–156; these read FWLS…ISAL, HPVL…FIFL, IPFV…CVFL, and YLTA…DMLL. The MARVEL domain maps to 40–162; that stretch reads FWLSGHAVFK…DMLLQFQHFR (123 aa).

It belongs to the chemokine-like factor family.

Its subcellular location is the membrane. This chain is CKLF-like MARVEL transmembrane domain-containing protein 2A (Cmtm2a), found in Mus musculus (Mouse).